The chain runs to 340 residues: 4-dimethylallyltryptophan N-methyltransferase easF (340 aa).

It belongs to the methyltransferase superfamily. Homodimer.

The catalysed reaction is 4-(3-methylbut-2-enyl)-L-tryptophan + S-adenosyl-L-methionine = 4-(3-methylbut-2-enyl)-L-abrine + S-adenosyl-L-homocysteine + H(+). Its pathway is alkaloid biosynthesis; ergot alkaloid biosynthesis. Functionally, 4-dimethylallyltryptophan N-methyltransferase; part of the gene cluster that mediates the biosynthesis of fungal ergot alkaloid. DmaW catalyzes the first step of ergot alkaloid biosynthesis by condensing dimethylallyl diphosphate (DMAP) and tryptophan to form 4-dimethylallyl-L-tryptophan. The second step is catalyzed by the methyltransferase easF that methylates 4-dimethylallyl-L-tryptophan in the presence of S-adenosyl-L-methionine, resulting in the formation of 4-dimethylallyl-L-abrine. The catalase easC and the FAD-dependent oxidoreductase easE then transform 4-dimethylallyl-L-abrine to chanoclavine-I which is further oxidized by easD in the presence of NAD(+), resulting in the formation of chanoclavine-I aldehyde. Chanoclavine-I aldehyde is the precursor of ergoamides and ergopeptines in Clavicipitaceae, and clavine-type alcaloids such as fumiclavine in Trichocomaceae. However, the metabolites downstream of chanoclavine-I aldehyde in Arthrodermataceae have not been identified yet. This Arthroderma benhamiae (strain ATCC MYA-4681 / CBS 112371) (Trichophyton mentagrophytes) protein is 4-dimethylallyltryptophan N-methyltransferase easF.